A 267-amino-acid chain; its full sequence is S-adenosylmethionine decarboxylase proenzyme (267 aa).

The Schiff-base intermediate with substrate; via pyruvic acid role is filled by Ser-114. A Pyruvic acid (Ser); by autocatalysis modification is found at Ser-114. The Proton acceptor; for processing activity role is filled by His-119. The active-site Proton donor; for catalytic activity is Cys-142.

It belongs to the prokaryotic AdoMetDC family. Type 2 subfamily. Heterooctamer of four alpha and four beta chains arranged as a tetramer of alpha/beta heterodimers. Pyruvate is required as a cofactor. In terms of processing, is synthesized initially as an inactive proenzyme. Formation of the active enzyme involves a self-maturation process in which the active site pyruvoyl group is generated from an internal serine residue via an autocatalytic post-translational modification. Two non-identical subunits are generated from the proenzyme in this reaction, and the pyruvate is formed at the N-terminus of the alpha chain, which is derived from the carboxyl end of the proenzyme. The post-translation cleavage follows an unusual pathway, termed non-hydrolytic serinolysis, in which the side chain hydroxyl group of the serine supplies its oxygen atom to form the C-terminus of the beta chain, while the remainder of the serine residue undergoes an oxidative deamination to produce ammonia and the pyruvoyl group blocking the N-terminus of the alpha chain.

The enzyme catalyses S-adenosyl-L-methionine + H(+) = S-adenosyl 3-(methylsulfanyl)propylamine + CO2. Its pathway is amine and polyamine biosynthesis; S-adenosylmethioninamine biosynthesis; S-adenosylmethioninamine from S-adenosyl-L-methionine: step 1/1. In terms of biological role, catalyzes the decarboxylation of S-adenosylmethionine to S-adenosylmethioninamine (dcAdoMet), the propylamine donor required for the synthesis of the polyamines spermine and spermidine from the diamine putrescine. This Erwinia tasmaniensis (strain DSM 17950 / CFBP 7177 / CIP 109463 / NCPPB 4357 / Et1/99) protein is S-adenosylmethionine decarboxylase proenzyme.